Consider the following 481-residue polypeptide: uncharacterized protein (481 aa).

Positions 1–28 are disordered; the sequence is MPQSNHYSHQSRSHNDRRRQQPDEKVQA. The region spanning 29–87 is the TRAM domain; the sequence is TVNIGQRFPLTIRRLGINGEGIGYYKHVITFVKGALPEEVVVAEVTAVHPRYLEAKIRS. S-adenosyl-L-methionine-binding residues include Gln-313, Tyr-342, Asp-363, and Asp-411. Cys-438 acts as the Nucleophile in catalysis.

This sequence belongs to the class I-like SAM-binding methyltransferase superfamily. RNA M5U methyltransferase family.

This is an uncharacterized protein from Lactiplantibacillus plantarum (strain ATCC BAA-793 / NCIMB 8826 / WCFS1) (Lactobacillus plantarum).